The primary structure comprises 436 residues: Tol-Pal system protein TolB (436 aa).

A signal peptide spans 1–19 (MVKCSLIRALMVVAGLVGA).

The protein belongs to the TolB family. In terms of assembly, the Tol-Pal system is composed of five core proteins: the inner membrane proteins TolA, TolQ and TolR, the periplasmic protein TolB and the outer membrane protein Pal. They form a network linking the inner and outer membranes and the peptidoglycan layer.

It localises to the periplasm. Functionally, part of the Tol-Pal system, which plays a role in outer membrane invagination during cell division and is important for maintaining outer membrane integrity. In Rhizobium etli (strain ATCC 51251 / DSM 11541 / JCM 21823 / NBRC 15573 / CFN 42), this protein is Tol-Pal system protein TolB.